The sequence spans 106 residues: Small ribosomal subunit protein uS10 (106 aa).

The protein belongs to the universal ribosomal protein uS10 family. As to quaternary structure, part of the 30S ribosomal subunit.

Functionally, involved in the binding of tRNA to the ribosomes. This is Small ribosomal subunit protein uS10 from Wolbachia pipientis subsp. Culex pipiens (strain wPip).